The sequence spans 328 residues: Carbonic anhydrase-related protein 10 (328 aa).

Positions 31-301 (GWWAYKEVVQ…LNNRCIRTNI (271 aa)) constitute an Alpha-carbonic anhydrase domain.

The protein belongs to the alpha-carbonic anhydrase family.

Functionally, does not have a catalytic activity. The chain is Carbonic anhydrase-related protein 10 (CA10) from Bos taurus (Bovine).